Reading from the N-terminus, the 99-residue chain is Plastocyanin (99 aa).

In terms of domain architecture, Plastocyanin-like spans 1-99 (LDVLLGSDDG…AGMVGKVTVN (99 aa)). Residues His-37, Cys-84, His-87, and Met-92 each coordinate Cu cation.

This sequence belongs to the plastocyanin family. Cu(2+) is required as a cofactor.

It localises to the plastid. The protein resides in the chloroplast thylakoid membrane. In terms of biological role, participates in electron transfer between P700 and the cytochrome b6-f complex in photosystem I. This Mercurialis perennis (Dog's mercury) protein is Plastocyanin (PETE).